The sequence spans 591 residues: Vomeromodulin (591 aa).

A signal peptide spans 1 to 18; sequence MWVLQALAIMLSIQAGTL. The disordered stretch occupies residues 151–172; sequence NEGNGDSSKPSSGSKATGGLGQ. 2 N-linked (GlcNAc...) asparagine glycosylation sites follow: N421 and N516.

In terms of processing, N-glycosylated. The N-glycans consist mainly of complex sialylated and fucosylated biantennary structures. Expressed in lung. Not detected in other tissues tested (at protein level).

It localises to the secreted. The protein is Vomeromodulin of Mus musculus (Mouse).